The sequence spans 493 residues: Ketol-acid reductoisomerase (NADP(+)) (493 aa).

The KARI N-terminal Rossmann domain occupies 14-208 (LDQLGRCRFM…GGDRAGVLES (195 aa)). NADP(+) is bound by residues 45-48 (CGAQ), Arg-68, Arg-76, Ser-78, and 108-110 (DKQ). Residue His-132 is part of the active site. Gly-158 lines the NADP(+) pocket. KARI C-terminal knotted domains are found at residues 209–345 (SFVA…APKA) and 346–486 (DGIK…MTDM). Mg(2+) contacts are provided by Asp-217, Glu-221, Glu-390, and Glu-394. Substrate is bound at residue Ser-415.

This sequence belongs to the ketol-acid reductoisomerase family. It depends on Mg(2+) as a cofactor.

The catalysed reaction is (2R)-2,3-dihydroxy-3-methylbutanoate + NADP(+) = (2S)-2-acetolactate + NADPH + H(+). The enzyme catalyses (2R,3R)-2,3-dihydroxy-3-methylpentanoate + NADP(+) = (S)-2-ethyl-2-hydroxy-3-oxobutanoate + NADPH + H(+). It functions in the pathway amino-acid biosynthesis; L-isoleucine biosynthesis; L-isoleucine from 2-oxobutanoate: step 2/4. It participates in amino-acid biosynthesis; L-valine biosynthesis; L-valine from pyruvate: step 2/4. Its function is as follows. Involved in the biosynthesis of branched-chain amino acids (BCAA). Catalyzes an alkyl-migration followed by a ketol-acid reduction of (S)-2-acetolactate (S2AL) to yield (R)-2,3-dihydroxy-isovalerate. In the isomerase reaction, S2AL is rearranged via a Mg-dependent methyl migration to produce 3-hydroxy-3-methyl-2-ketobutyrate (HMKB). In the reductase reaction, this 2-ketoacid undergoes a metal-dependent reduction by NADPH to yield (R)-2,3-dihydroxy-isovalerate. The chain is Ketol-acid reductoisomerase (NADP(+)) from Mannheimia succiniciproducens (strain KCTC 0769BP / MBEL55E).